We begin with the raw amino-acid sequence, 200 residues long: MAKFTQHTGLVVPLDAANVDTDAIIPKQFLQKVTRTGFGQHLFHDWRFLDDAGQQPNPEFVLNKPHYKGASILLARENFGCGSSREHAPWALTDYGFKVVIAPSFADIFYGNSFNNQLLPVKLSDEEVDELFKLVDGQEGINFIVDLENQVVQAGSKSYPFEIDSFRRHCMINGLDSIGLTLQHEASITEYEKNQPAFLN.

Belongs to the LeuD family. LeuD type 1 subfamily. In terms of assembly, heterodimer of LeuC and LeuD.

It carries out the reaction (2R,3S)-3-isopropylmalate = (2S)-2-isopropylmalate. The protein operates within amino-acid biosynthesis; L-leucine biosynthesis; L-leucine from 3-methyl-2-oxobutanoate: step 2/4. Its function is as follows. Catalyzes the isomerization between 2-isopropylmalate and 3-isopropylmalate, via the formation of 2-isopropylmaleate. The chain is 3-isopropylmalate dehydratase small subunit from Pectobacterium carotovorum subsp. carotovorum (strain PC1).